The chain runs to 418 residues: MMFSKSGLVAVAMLGASAVEAHMKMRQPTPYSDSSLNNSPLAADGSDFPCKLRDNAFVPPSQETIAQIGEVMPLTFTGSATHGGGSCQVSLTTDLKPSKDSKWMVIKSIEGGCPANVDGNMSGGADVPDPFEFNYTIPAGIEPGKYTLAWTWFNRIGNREMYMNCAPITVTAGSSKRDAAPVAEKVEVEKRSANFPAMFVANINGCTTKEGVDIRFPDPGDVVEYDGNPSNLQPAGEAACSGTPAWTVSGGSGSPSTPSTSSSTPAGTSAGVSVSVGATVGATPTAEPESSSSEPAESEGAPGVFAPTSATVFPSTPTASAAPTSSSSGAGSESDSSSSSNGALTGPCSTEGLWNCIDGSSFQRCANGQWTTAQQMAAGTECTVGQNAQFTISATAVKPRMINAMRHRKRAHGGHRHA.

The signal sequence occupies residues 1–21 (MMFSKSGLVAVAMLGASAVEA). Positions 22 and 82 each coordinate Cu(+). Cystine bridges form between Cys-50/Cys-165, Cys-87/Cys-113, and Cys-206/Cys-240. 2 N-linked (GlcNAc...) asparagine glycosylation sites follow: Asn-120 and Asn-134. Residues 226-345 (DGNPSNLQPA…SSSSSNGALT (120 aa)) form a disordered region. Over residues 254–345 (SPSTPSTSSS…SSSSSNGALT (92 aa)) the composition is skewed to low complexity.

The protein belongs to the polysaccharide monooxygenase AA11 family. It depends on Cu(2+) as a cofactor.

The protein localises to the secreted. Lytic polysaccharide monooxygenase (LPMO)-like protein that acts as a strict peroxygenase and does not catalyze a monooxygenase reaction. It is indeed hardly active on chitin, while being very active on soluble oligomers of N-acetylglucosamine. Cleaves the glycosidic bonds byoxidizing the C1 position. Also unable to oxidize cellopentaose. Probably breaks glycosidic bonds in non-polymeric substrates possibly carbohydrates in the cell wall of the fungus or its competitors. In the presence of chitotetraose, the enzyme can withstand considerable amounts of H(2)O(2), which it uses to efficiently and stoichiometrically convert this substrate. In Aspergillus fumigatus (strain ATCC MYA-4609 / CBS 101355 / FGSC A1100 / Af293) (Neosartorya fumigata), this protein is AA11 family lytic polysaccharide monooxygenase B.